A 671-amino-acid chain; its full sequence is DNA ligase (671 aa).

NAD(+)-binding positions include 37–41 (DIEYD), 86–87 (SL), and Glu-117. The active-site N6-AMP-lysine intermediate is Lys-119. Arg-140, Glu-177, Lys-295, and Lys-319 together coordinate NAD(+). Residues Cys-413, Cys-416, Cys-431, and Cys-437 each contribute to the Zn(2+) site. The BRCT domain maps to 594–671 (IISAAVFGKT…DEEEMLNLLK (78 aa)).

This sequence belongs to the NAD-dependent DNA ligase family. LigA subfamily. Requires Mg(2+) as cofactor. Mn(2+) serves as cofactor.

It catalyses the reaction NAD(+) + (deoxyribonucleotide)n-3'-hydroxyl + 5'-phospho-(deoxyribonucleotide)m = (deoxyribonucleotide)n+m + AMP + beta-nicotinamide D-nucleotide.. DNA ligase that catalyzes the formation of phosphodiester linkages between 5'-phosphoryl and 3'-hydroxyl groups in double-stranded DNA using NAD as a coenzyme and as the energy source for the reaction. It is essential for DNA replication and repair of damaged DNA. The polypeptide is DNA ligase (Polynucleobacter asymbioticus (strain DSM 18221 / CIP 109841 / QLW-P1DMWA-1) (Polynucleobacter necessarius subsp. asymbioticus)).